An 876-amino-acid polypeptide reads, in one-letter code: Alanine--tRNA ligase (876 aa).

H564, H568, C666, and H670 together coordinate Zn(2+).

It belongs to the class-II aminoacyl-tRNA synthetase family. Homotetramer. Requires Zn(2+) as cofactor.

The protein localises to the cytoplasm. It carries out the reaction tRNA(Ala) + L-alanine + ATP = L-alanyl-tRNA(Ala) + AMP + diphosphate. Catalyzes the attachment of alanine to tRNA(Ala) in a two-step reaction: alanine is first activated by ATP to form Ala-AMP and then transferred to the acceptor end of tRNA(Ala). Also edits incorrectly charged Ser-tRNA(Ala) and Gly-tRNA(Ala) via its editing domain. The polypeptide is Alanine--tRNA ligase (Salmonella choleraesuis (strain SC-B67)).